The primary structure comprises 227 residues: 2,3-bisphosphoglycerate-dependent phosphoglycerate mutase (227 aa).

Residues 7–14, 20–21, Arg59, 86–89, Lys97, 113–114, and 182–183 each bind substrate; these read RHGFSEWN, TG, ERHY, RR, and GN. The active-site Tele-phosphohistidine intermediate is the His8. The active-site Proton donor/acceptor is the Glu86.

This sequence belongs to the phosphoglycerate mutase family. BPG-dependent PGAM subfamily. In terms of assembly, homodimer.

The catalysed reaction is (2R)-2-phosphoglycerate = (2R)-3-phosphoglycerate. It functions in the pathway carbohydrate degradation; glycolysis; pyruvate from D-glyceraldehyde 3-phosphate: step 3/5. Functionally, catalyzes the interconversion of 2-phosphoglycerate and 3-phosphoglycerate. In Histophilus somni (strain 129Pt) (Haemophilus somnus), this protein is 2,3-bisphosphoglycerate-dependent phosphoglycerate mutase.